Here is a 221-residue protein sequence, read N- to C-terminus: Carbonic anhydrase (221 aa).

Zn(2+) contacts are provided by C57, D59, H112, and C115.

Belongs to the beta-class carbonic anhydrase family. Requires Zn(2+) as cofactor.

It localises to the cytoplasm. The protein localises to the nucleus. Its subcellular location is the mitochondrion intermembrane space. The enzyme catalyses hydrogencarbonate + H(+) = CO2 + H2O. In terms of biological role, catalyzes the reversible hydration of CO(2) to H(2)CO(3). The main role may be to provide inorganic carbon for the bicarbonate-dependent carboxylation reactions catalyzed by pyruvate carboxylase, acetyl-CoA carboxylase and carbamoyl-phosphate synthetase. Involved in protection against oxidative damage. Encodes a substrate for the non-classical protein export pathway for proteins that lack a cleavable signal sequence. The sequence is that of Carbonic anhydrase (NCE103) from Saccharomyces cerevisiae (strain ATCC 204508 / S288c) (Baker's yeast).